The following is a 362-amino-acid chain: Methionine import ATP-binding protein MetN (362 aa).

The ABC transporter domain maps to Val23–Leu258. An ATP-binding site is contributed by Gly55 to Ser62.

It belongs to the ABC transporter superfamily. Methionine importer (TC 3.A.1.24) family. As to quaternary structure, the complex is composed of two ATP-binding proteins (MetN), two transmembrane proteins (MetI) and a solute-binding protein (MetQ).

The protein resides in the cell inner membrane. The enzyme catalyses L-methionine(out) + ATP + H2O = L-methionine(in) + ADP + phosphate + H(+). The catalysed reaction is D-methionine(out) + ATP + H2O = D-methionine(in) + ADP + phosphate + H(+). Part of the ABC transporter complex MetNIQ involved in methionine import. Responsible for energy coupling to the transport system. This Rhizobium johnstonii (strain DSM 114642 / LMG 32736 / 3841) (Rhizobium leguminosarum bv. viciae) protein is Methionine import ATP-binding protein MetN.